Consider the following 543-residue polypeptide: Chaperonin GroEL 1 (543 aa).

Residues 29-32 (TLGP), 86-90 (DGTTT), Gly413, 479-481 (NAA), and Asp495 contribute to the ATP site.

This sequence belongs to the chaperonin (HSP60) family. Forms a cylinder of 14 subunits composed of two heptameric rings stacked back-to-back. Interacts with the co-chaperonin GroES.

It is found in the cytoplasm. The enzyme catalyses ATP + H2O + a folded polypeptide = ADP + phosphate + an unfolded polypeptide.. Together with its co-chaperonin GroES, plays an essential role in assisting protein folding. The GroEL-GroES system forms a nano-cage that allows encapsulation of the non-native substrate proteins and provides a physical environment optimized to promote and accelerate protein folding. The chain is Chaperonin GroEL 1 from Prochlorococcus marinus (strain NATL2A).